Here is a 95-residue protein sequence, read N- to C-terminus: UPF0235 protein A2cp1_1215 (95 aa).

This sequence belongs to the UPF0235 family.

The sequence is that of UPF0235 protein A2cp1_1215 from Anaeromyxobacter dehalogenans (strain 2CP-1 / ATCC BAA-258).